Reading from the N-terminus, the 93-residue chain is uncharacterized protein (93 aa).

A disordered region spans residues 41-62; the sequence is RSANRIPTTSSTSTSGTIPTTT. The span at 46–62 shows a compositional bias: low complexity; sequence IPTTSSTSTSGTIPTTT.

This is an uncharacterized protein from Dictyostelium discoideum (Social amoeba).